A 238-amino-acid polypeptide reads, in one-letter code: RNA pyrophosphohydrolase (238 aa).

The Nudix hydrolase domain maps to Gly6–Ser149. Residues Gly38–Gly59 carry the Nudix box motif. A disordered region spans residues Ala161–Leu238. The segment covering Pro171–Arg181 has biased composition (basic and acidic residues). The segment covering Arg188–Pro199 has biased composition (polar residues). Residues Val204–Ser217 are compositionally biased toward low complexity.

The protein belongs to the Nudix hydrolase family. RppH subfamily. It depends on a divalent metal cation as a cofactor.

Its function is as follows. Accelerates the degradation of transcripts by removing pyrophosphate from the 5'-end of triphosphorylated RNA, leading to a more labile monophosphorylated state that can stimulate subsequent ribonuclease cleavage. This Ralstonia nicotianae (strain ATCC BAA-1114 / GMI1000) (Ralstonia solanacearum) protein is RNA pyrophosphohydrolase.